The following is a 183-amino-acid chain: CKLF-like MARVEL transmembrane domain-containing protein 6 (183 aa).

Met1 is subject to N-acetylmethionine. Over 1–39 (MENGAVYSPTTEEDPGPARGPRSGLAAYFFMGRLPLLRR) the chain is Cytoplasmic. At Ser8 the chain carries Phosphoserine. The 128-residue stretch at 33–160 (RLPLLRRVLK…DFITMLYEKR (128 aa)) folds into the MARVEL domain. The chain crosses the membrane as a helical span at residues 40 to 60 (VLKGLQLLLSLLAFICEEVVS). Residues 61–67 (QCTLCGG) lie on the Extracellular side of the membrane. Residues 68-88 (LYFFEFVSCSAFLLSLLILIV) form a helical membrane-spanning segment. The Cytoplasmic segment spans residues 89 to 106 (YCTPFYERVDTTKVKSSD). A helical transmembrane segment spans residues 107 to 127 (FYITLGTGCVFLLASIIFVST). The Extracellular portion of the chain corresponds to 128–134 (HDRTSAE). Residues 135 to 155 (IAAIVFGFIASFMFLLDFITM) form a helical membrane-spanning segment. Residues 156-183 (LYEKRQESQLRKPENTTRAEALTEPLNA) lie on the Cytoplasmic side of the membrane. Thr171 is modified (phosphothreonine).

Belongs to the chemokine-like factor family. As to quaternary structure, interacts with PD-L1/CD274 (via transmembrane domain); the interaction is direct. Interacts with CMTM4. Interacts with CD58, ARG1, ENO1 and TMPO. Expressed in the leukocytes, placenta and testis.

Its subcellular location is the cell membrane. The protein resides in the early endosome membrane. It is found in the recycling endosome membrane. In terms of biological role, master regulator of recycling and plasma membrane expression of PD-L1/CD274, an immune inhibitory ligand critical for immune tolerance to self and antitumor immunity. Associates with both constitutive and IFNG-induced PD-L1/CD274 at recycling endosomes, where it protects PD-L1/CD274 from being targeted for lysosomal degradation, likely by preventing its STUB1-mediated ubiquitination. May stabilize PD-L1/CD274 expression on antigen presenting cells and potentiates inhibitory signaling by PDCD1/CD279, its receptor on T-cells, ultimately triggering T-cell anergy. In Homo sapiens (Human), this protein is CKLF-like MARVEL transmembrane domain-containing protein 6.